The chain runs to 234 residues: Large ribosomal subunit protein uL1 (234 aa).

This sequence belongs to the universal ribosomal protein uL1 family. Part of the 50S ribosomal subunit.

Functionally, binds directly to 23S rRNA. The L1 stalk is quite mobile in the ribosome, and is involved in E site tRNA release. In terms of biological role, protein L1 is also a translational repressor protein, it controls the translation of the L11 operon by binding to its mRNA. The sequence is that of Large ribosomal subunit protein uL1 from Aliivibrio fischeri (strain ATCC 700601 / ES114) (Vibrio fischeri).